Here is a 247-residue protein sequence, read N- to C-terminus: ATP synthase subunit a, chloroplastic (247 aa).

The next 5 helical transmembrane spans lie at 38–58 (QVLI…IIAV), 95–115 (VPFI…GALL), 134–154 (INTT…AGLS), 199–219 (LVVV…VMFL), and 220–240 (GLFT…AYIG).

This sequence belongs to the ATPase A chain family. As to quaternary structure, F-type ATPases have 2 components, CF(1) - the catalytic core - and CF(0) - the membrane proton channel. CF(1) has five subunits: alpha(3), beta(3), gamma(1), delta(1), epsilon(1). CF(0) has four main subunits: a, b, b' and c.

It localises to the plastid. Its subcellular location is the chloroplast thylakoid membrane. Its function is as follows. Key component of the proton channel; it plays a direct role in the translocation of protons across the membrane. In Cucumis sativus (Cucumber), this protein is ATP synthase subunit a, chloroplastic.